The following is a 399-amino-acid chain: Succinate--CoA ligase [ADP-forming] subunit beta (399 aa).

The ATP-grasp domain occupies 9–254 (KALLREFGVP…ESEEDAKEIE (246 aa)). Residues K46, 53 to 55 (GRG), E109, S112, and E117 contribute to the ATP site. Mg(2+) is bound by residues N209 and D223. Substrate-binding positions include N274 and 331–333 (GIM).

It belongs to the succinate/malate CoA ligase beta subunit family. Heterotetramer of two alpha and two beta subunits. Mg(2+) serves as cofactor.

The enzyme catalyses succinate + ATP + CoA = succinyl-CoA + ADP + phosphate. It carries out the reaction GTP + succinate + CoA = succinyl-CoA + GDP + phosphate. It participates in carbohydrate metabolism; tricarboxylic acid cycle; succinate from succinyl-CoA (ligase route): step 1/1. Succinyl-CoA synthetase functions in the citric acid cycle (TCA), coupling the hydrolysis of succinyl-CoA to the synthesis of either ATP or GTP and thus represents the only step of substrate-level phosphorylation in the TCA. The beta subunit provides nucleotide specificity of the enzyme and binds the substrate succinate, while the binding sites for coenzyme A and phosphate are found in the alpha subunit. The sequence is that of Succinate--CoA ligase [ADP-forming] subunit beta from Nitrobacter winogradskyi (strain ATCC 25391 / DSM 10237 / CIP 104748 / NCIMB 11846 / Nb-255).